The sequence spans 580 residues: 3-(3-hydroxy-phenyl)propionate/3-hydroxycinnamic acid hydroxylase (580 aa).

FAD-binding positions include 14-43 and 291-301; these read DVLV…VVEE and FRRGRLLLAGD.

Belongs to the PheA/TfdB FAD monooxygenase family. The cofactor is FAD.

The enzyme catalyses 3-(3-hydroxyphenyl)propanoate + NADH + O2 + H(+) = 3-(2,3-dihydroxyphenyl)propanoate + NAD(+) + H2O. The catalysed reaction is (2E)-3-(3-hydroxyphenyl)prop-2-enoate + NADH + O2 + H(+) = (2E)-3-(2,3-dihydroxyphenyl)prop-2-enoate + NAD(+) + H2O. Its pathway is aromatic compound metabolism; 3-phenylpropanoate degradation. In terms of biological role, catalyzes the insertion of one atom of molecular oxygen into position 2 of the phenyl ring of 3-(3-hydroxyphenyl)propionate (3-HPP) and hydroxycinnamic acid (3HCI). This chain is 3-(3-hydroxy-phenyl)propionate/3-hydroxycinnamic acid hydroxylase, found in Mycobacterium avium (strain 104).